The chain runs to 72 residues: Conotoxin im23a (72 aa).

The first 22 residues, 1 to 22 (MIMRMTLTLFVLVVMTAASASG), serve as a signal peptide directing secretion. The propeptide occupies 23-28 (DALTEA). Cystine bridges form between Cys-34/Cys-41, Cys-45/Cys-55, and Cys-56/Cys-71.

The protein belongs to the conotoxin K superfamily. Expressed by the venom duct.

It is found in the secreted. Its function is as follows. Neurotoxin that induces excitatory symptoms in mice following intracranial administration. No symptoms are observed after intraperitoneal and intravenous (tail vein) injections. This is Conotoxin im23a from Conus imperialis (Imperial cone).